Here is a 204-residue protein sequence, read N- to C-terminus: High frequency lysogenization protein HflD homolog (204 aa).

The protein belongs to the HflD family.

It is found in the cytoplasm. Its subcellular location is the cell inner membrane. The sequence is that of High frequency lysogenization protein HflD homolog from Ruthia magnifica subsp. Calyptogena magnifica.